Here is a 185-residue protein sequence, read N- to C-terminus: Ribosome-recycling factor (185 aa).

Belongs to the RRF family.

Its subcellular location is the cytoplasm. Responsible for the release of ribosomes from messenger RNA at the termination of protein biosynthesis. May increase the efficiency of translation by recycling ribosomes from one round of translation to another. In Halalkalibacterium halodurans (strain ATCC BAA-125 / DSM 18197 / FERM 7344 / JCM 9153 / C-125) (Bacillus halodurans), this protein is Ribosome-recycling factor.